Reading from the N-terminus, the 136-residue chain is Small ribosomal subunit protein eS8 (136 aa).

It belongs to the eukaryotic ribosomal protein eS8 family. As to quaternary structure, part of the 30S ribosomal subunit.

The protein is Small ribosomal subunit protein eS8 (rps8e) of Aeropyrum pernix (strain ATCC 700893 / DSM 11879 / JCM 9820 / NBRC 100138 / K1).